Reading from the N-terminus, the 308-residue chain is Transaldolase (308 aa).

Lys125 acts as the Schiff-base intermediate with substrate in catalysis.

It belongs to the transaldolase family. Type 1 subfamily. In terms of assembly, homodimer.

The protein localises to the cytoplasm. The enzyme catalyses D-sedoheptulose 7-phosphate + D-glyceraldehyde 3-phosphate = D-erythrose 4-phosphate + beta-D-fructose 6-phosphate. Its pathway is carbohydrate degradation; pentose phosphate pathway; D-glyceraldehyde 3-phosphate and beta-D-fructose 6-phosphate from D-ribose 5-phosphate and D-xylulose 5-phosphate (non-oxidative stage): step 2/3. Transaldolase is important for the balance of metabolites in the pentose-phosphate pathway. This is Transaldolase from Pseudomonas putida (strain GB-1).